The following is a 238-amino-acid chain: Fatty acid metabolism regulator protein (238 aa).

Positions 6–74 (KGPASFAEKY…HGKPTRVNNF (69 aa)) constitute an HTH gntR-type domain. A DNA-binding region (H-T-H motif) is located at residues 34-53 (ERELSELIGVTRTTLREVLQ).

As to quaternary structure, homodimer.

The protein resides in the cytoplasm. Its function is as follows. Multifunctional regulator of fatty acid metabolism. The protein is Fatty acid metabolism regulator protein of Shewanella baltica (strain OS155 / ATCC BAA-1091).